Consider the following 209-residue polypeptide: MRQHVNPLSSNFNKIERIPSLSEMFGDSKLNLHLDIGCAAGEFLFNLASVNTSWNYLGIEIREKLVKNAKLKVFEREIKNLYFVFGNANNILNDVQSKYIIRNIKSISFNFPDPWFKKRHYKRRVIQPEFINVLSNQLQKGTLIFIKTDVKELFDYMDRTISSNFYFKKIDKKDFNYSESFNPNKVKTNRENYVIVNQINIFERIYMRI.

Residues aspartate 35, glutamate 60, asparagine 87, and aspartate 113 each contribute to the S-adenosyl-L-methionine site. Aspartate 113 is an active-site residue. Substrate-binding residues include lysine 117 and aspartate 149.

This sequence belongs to the class I-like SAM-binding methyltransferase superfamily. TrmB family.

It carries out the reaction guanosine(46) in tRNA + S-adenosyl-L-methionine = N(7)-methylguanosine(46) in tRNA + S-adenosyl-L-homocysteine. Its pathway is tRNA modification; N(7)-methylguanine-tRNA biosynthesis. In terms of biological role, catalyzes the formation of N(7)-methylguanine at position 46 (m7G46) in tRNA. The protein is tRNA (guanine-N(7)-)-methyltransferase of Prochlorococcus marinus (strain MIT 9215).